A 303-amino-acid chain; its full sequence is MLWFKNLMVYRLSREVALNADEMEKQLSAFAFTPCGSQDMAKTGWVSPMGSHSESLTHAVNGQIVICARKEEKILPSPVIKQELQAKIERLEGEQHRKLKKTEKDALKDEVLHSLLPRAFSRFNQTFMWIDTVNDLIMVDAASAKRAEDTLALLRKSLGSLPVVPLTMESPIELTLTEWVRSGELPAGFIIQDEAELKAILEDGGVIRCKKQNLISDEIAVHIEAGKLVTKLAVDWQERIQLVLADDGSLKRLKFADTLREQNDDIDRDDFAQRFDADFILMTSELAALIKNTIEALGGEAQR.

This sequence belongs to the RdgC family.

The protein localises to the cytoplasm. It localises to the nucleoid. In terms of biological role, may be involved in recombination. The sequence is that of Recombination-associated protein RdgC from Serratia proteamaculans (strain 568).